Consider the following 168-residue polypeptide: Chemoreceptor glutamine deamidase CheD (168 aa).

The protein belongs to the CheD family. Forms a complex with CheC.

The catalysed reaction is L-glutaminyl-[protein] + H2O = L-glutamyl-[protein] + NH4(+). In terms of biological role, deamidates glutamine residues to glutamate on methyl-accepting chemotaxis receptors (MCPs). CheD-mediated MCP deamidation is required for productive communication of the conformational signals of the chemoreceptors to the CheA kinase. The polypeptide is Chemoreceptor glutamine deamidase CheD (Bacillus licheniformis (strain ATCC 14580 / DSM 13 / JCM 2505 / CCUG 7422 / NBRC 12200 / NCIMB 9375 / NCTC 10341 / NRRL NRS-1264 / Gibson 46)).